Consider the following 232-residue polypeptide: Small ribosomal subunit protein uS3 (232 aa).

A KH type-2 domain is found at 39 to 107; the sequence is VRQFLTKELA…PAQINIAEVR (69 aa).

The protein belongs to the universal ribosomal protein uS3 family. As to quaternary structure, part of the 30S ribosomal subunit. Forms a tight complex with proteins S10 and S14.

Its function is as follows. Binds the lower part of the 30S subunit head. Binds mRNA in the 70S ribosome, positioning it for translation. The chain is Small ribosomal subunit protein uS3 from Erwinia tasmaniensis (strain DSM 17950 / CFBP 7177 / CIP 109463 / NCPPB 4357 / Et1/99).